Reading from the N-terminus, the 333-residue chain is Plasminogen (333 aa).

In terms of domain architecture, Kringle 5 spans cysteine 4–cysteine 83. 9 disulfides stabilise this stretch: cysteine 4/cysteine 83, cysteine 25/cysteine 66, cysteine 54/cysteine 78, cysteine 90/cysteine 208, cysteine 100/cysteine 108, cysteine 130/cysteine 146, cysteine 222/cysteine 289, cysteine 252/cysteine 268, and cysteine 279/cysteine 307. The Peptidase S1 domain maps to valine 104–arginine 331. Serine 120 carries the phosphoserine modification. Catalysis depends on charge relay system residues histidine 145 and aspartate 188. Serine 283 serves as the catalytic Charge relay system.

The protein belongs to the peptidase S1 family. Plasminogen subfamily. As to quaternary structure, interacts with CSPG4 and AMOT. Interacts (via the Kringle domains) with HRG; the interaction tethers PLG to the cell surface and enhances its activation. Interacts (via Kringle 4 domain) with ADA; the interaction stimulates PLG activation when in complex with DPP4. Angiostatin: Interacts with ATP5F1A; the interaction inhibits most of the angiogenic effects of angiostatin.

The protein resides in the secreted. The catalysed reaction is Preferential cleavage: Lys-|-Xaa &gt; Arg-|-Xaa, higher selectivity than trypsin. Converts fibrin into soluble products.. Its activity is regulated as follows. Converted into plasmin by plasminogen activators, both plasminogen and its activator being bound to fibrin. Activated with urokinase and high concentrations of streptokinase. Its function is as follows. Plasmin dissolves the fibrin of blood clots and acts as a proteolytic factor in a variety of other processes including embryonic development, tissue remodeling, tumor invasion, and inflammation. In ovulation, weakens the walls of the Graafian follicle. It activates the urokinase-type plasminogen activator, collagenases and several complement zymogens, such as C1, C4 and C5. Cleavage of fibronectin and laminin leads to cell detachment and apoptosis. Also cleaves fibrin, thrombospondin and von Willebrand factor. Its role in tissue remodeling and tumor invasion may be modulated by CSPG4. Binds to cells. The polypeptide is Plasminogen (PLG) (Canis lupus familiaris (Dog)).